A 573-amino-acid chain; its full sequence is MYDNMSTMVYIKEDKLEKLTQDEIISKTKQVIQGLEALKNEHNSILQSLLETLKCLKKDDESNLVEEKSNMIRKSLEMLELGLSEAQVMMALSNHLNAVESEKQKLRAQVRRLCQENQWLRDELANTQQKLQKSEQSVAQLEEEKKHLEFMNQLKKYDDDISPSEDKDTDSTKEPLDDLFPNDEDDPGQGIQQQHSSAAAAAQQGGYEIPARLRTLHNLVIQYASQGRYEVAVPLCKQALEDLEKTSGHDHPDVATMLNILALVYRDQNKYKDAANLLNDALAIREKTLGKDHPAVAATLNNLAVLYGKRGKYKEAEPLCKRALEIREKVLGKDHPDVAKQLNNLALLCQNQGKYEEVEYYYQRALEIYQTKLGPDDPNVAKTKNNLASCYLKQGKFKQAETLYKEILTRAHEREFGSVDDENKPIWMHAEEREECKGKQKDGTSFGEYGGWYKACKVDSPTVTTTLKNLGALYRRQGKFEAAETLEEAAMRSRKQGLDNVHKQRVAEVLNDPENMEKRRSRESLNVDVVKYESGPDGGEEVSMSVEWNGGVSGRASFCGKRQQQQWPGRRHR.

Residues 27–156 (KTKQVIQGLE…HLEFMNQLKK (130 aa)) are a coiled coil. A compositionally biased stretch (basic and acidic residues) spans 155-176 (KKYDDDISPSEDKDTDSTKEPL). Positions 155 to 203 (KKYDDDISPSEDKDTDSTKEPLDDLFPNDEDDPGQGIQQQHSSAAAAAQ) are disordered. S162 is modified (phosphoserine). Over residues 188–203 (GQGIQQQHSSAAAAAQ) the composition is skewed to low complexity. 5 TPR repeats span residues 213–246 (LRTL…LEKT), 255–288 (ATML…REKT), 297–330 (AATL…REKV), 339–372 (AKQL…YQTK), and 381–414 (AKTK…AHER). The residue at position 449 (Y449) is a Phosphotyrosine. S460 is modified (phosphoserine). The stretch at 464-497 (TTTLKNLGALYRRQGKFEAAETLEEAAMRSRKQG) is one TPR 6 repeat. Phosphoserine; by AMPK occurs at positions 521 and 524. Phosphoserine is present on E547. Positions 553 to 573 (SGRASFCGKRQQQQWPGRRHR) are disordered.

This sequence belongs to the kinesin light chain family. Oligomeric complex composed of two heavy chains and two light chains. Interacts with SPAG9. Interacts with ATCAY; may link mitochondria to KLC1 and regulate mitochondria localization into neuron projections. Interacts (via TPR repeats) with TOR1A; the interaction associates TOR1A with the kinesin oligomeric complex. Interacts with BORCS5. Interacts with MAPK8IP3/JIP3 and NTRK2/TRKB; interaction with NTRK2/TRKB is mediated by MAPK8IP3/JIP3. Interacts with CLSTN1; phosphorylation at Ser-460 inhibits interaction with CLSTN1. As to quaternary structure, (Microbial infection) Interacts with adenovirus hexon-interlacing protein; this interaction leads to capsid disruption at the nuclear pore complex during virus entry into host cell. Post-translationally, phosphorylation at Ser-460 by ERK inhibits interaction with CLSTN1 and localization to cytoplasmic vesicles. As to expression, found in a variety of tissues. Mostly abundant in brain and spine.

The protein localises to the cell projection. It localises to the growth cone. Its subcellular location is the cytoplasmic vesicle. The protein resides in the cytoplasm. It is found in the cytoskeleton. In terms of biological role, kinesin is a microtubule-associated force-producing protein that may play a role in organelle transport. The light chain may function in coupling of cargo to the heavy chain or in the modulation of its ATPase activity. This is Kinesin light chain 1 (KLC1) from Homo sapiens (Human).